A 320-amino-acid polypeptide reads, in one-letter code: Methylenetetrahydrofolate dehydrogenase [NAD(+)] (320 aa).

Residue cysteine 150 is part of the active site. NAD(+)-binding positions include 185–186, 208–209, and 274–276; these read RS, DV, and FAC.

Belongs to the tetrahydrofolate dehydrogenase/cyclohydrolase family. As to quaternary structure, homodimer. The N-terminus is blocked.

Its subcellular location is the cytoplasm. It is found in the nucleus. The catalysed reaction is (6R)-5,10-methylene-5,6,7,8-tetrahydrofolate + NAD(+) = (6R)-5,10-methenyltetrahydrofolate + NADH. Its function is as follows. Catalyzes oxidation of cytoplasmic one-carbon units for purine biosynthesis. In Saccharomyces cerevisiae (strain ATCC 204508 / S288c) (Baker's yeast), this protein is Methylenetetrahydrofolate dehydrogenase [NAD(+)] (MTD1).